The following is a 77-amino-acid chain: Chaplin-H (77 aa).

A signal peptide spans M1 to A25. A Chaplin domain is found at S36 to N76. Forms amyloid fibrils in vitro regions lie at residues G38–N54 and G57–N72. C56 and C74 are joined by a disulfide.

The protein belongs to the chaplin family. Short chaplin subfamily. Homodimer; disulfide linked. About 10% of ChpH isolated from cell wall forms disulfide-bonded homodimers.

The protein localises to the cell surface. It is found in the secreted. It localises to the cell wall. The protein resides in the fimbrium. In terms of biological role, one of 8 partially redundant surface-active proteins required for efficient formation of aerial mycelium; the short chaplins assemble into a hydrophobic, amyloidal fibrillar surface layer that envelopes and protects aerial hyphae and spores, presumably anchored to the long chaplins. Chaplins have an overlapping function with the surface-active SapB peptide; chaplins are essential on minimal medium while on rich medium both chaplins and SapB are required for efficient aerial hyphae formation. Chaplins are also involved in cell attachment to a hydrophobic surface. Forms amyloid fibrils in vitro probably composed of stacked beta-sheets. A small chaplin extract (ChpD, ChpE, ChpF, ChpG and ChpH) self-assembles into 2 different amyloids; small fibrils at the air-water interface form an amphipathic membrane that resembles spore-surface structures involved in aerial hyphae formation, and hydrophilic fibrils in solution that resemble the fibers that attach cells to a hydrophobic surface. At the air-water interface the hydrophilic surface is in contact with water (probably equivalent to the peptidoglycan layer), while the hydrophobic face is exposed to the air, making the surface of the aerial hyphae hydrophobic. A minimal chaplin strain capable of forming aerial mycelium/hyphae on minimal medium contains ChpC, ChpE and ChpH. The strain also has restored rodlet formation on the hyphae surface. A small chaplin extract applied to a chaplin-deficient strain restores aerial hyphae formation. The small chaplin extract forms an amyloid-like structure similar to that seen on the surface of cells without rodlets (rdlA-rdlB deletions), and is highly surface active, reducing surface tension from 72 to 26 mJ/m(2), which probably allows escape of hyphae from an aqueous environment into air. This is Chaplin-H from Streptomyces coelicolor (strain ATCC BAA-471 / A3(2) / M145).